A 500-amino-acid chain; its full sequence is Glutamate--tRNA ligase (500 aa).

A 'HIGH' region motif is present at residues 13 to 23; sequence PSPTGTPHVGM. The short motif at 258-262 is the 'KMSKS' region element; that stretch reads KLSKR. K261 is a binding site for ATP.

It belongs to the class-I aminoacyl-tRNA synthetase family. Glutamate--tRNA ligase type 1 subfamily. Monomer.

The protein localises to the cytoplasm. It catalyses the reaction tRNA(Glu) + L-glutamate + ATP = L-glutamyl-tRNA(Glu) + AMP + diphosphate. Catalyzes the attachment of glutamate to tRNA(Glu) in a two-step reaction: glutamate is first activated by ATP to form Glu-AMP and then transferred to the acceptor end of tRNA(Glu). The sequence is that of Glutamate--tRNA ligase from Corynebacterium jeikeium (strain K411).